The chain runs to 274 residues: Glutamate racemase (274 aa).

Residues 9–10 and 41–42 each bind substrate; these read DS and YG. The active-site Proton donor/acceptor is Cys-73. 74-75 contributes to the substrate binding site; the sequence is NT. Residue Cys-183 is the Proton donor/acceptor of the active site. Residue 184 to 185 coordinates substrate; that stretch reads TH.

It belongs to the aspartate/glutamate racemases family.

It catalyses the reaction L-glutamate = D-glutamate. Its pathway is cell wall biogenesis; peptidoglycan biosynthesis. Provides the (R)-glutamate required for cell wall biosynthesis. The protein is Glutamate racemase of Shewanella baltica (strain OS223).